The sequence spans 135 residues: Small ribosomal subunit protein uS9 (135 aa).

Basic and acidic residues predominate over residues 107 to 118 (LVGDPRRTEPHK). Positions 107-135 (LVGDPRRTEPHKPNRSTKGPRAKRQKSYR) are disordered. Residues 119 to 135 (PNRSTKGPRAKRQKSYR) are compositionally biased toward basic residues.

This sequence belongs to the universal ribosomal protein uS9 family. Part of the 30S ribosomal subunit.

The protein is Small ribosomal subunit protein uS9 of Pyrococcus furiosus (strain ATCC 43587 / DSM 3638 / JCM 8422 / Vc1).